The following is a 207-amino-acid chain: Protein GrpE (207 aa).

The segment at 1-31 is disordered; it reads MSEHQTPPEEDLTVANGDSAEAVSEPDVTVA.

This sequence belongs to the GrpE family. Homodimer.

The protein resides in the cytoplasm. Participates actively in the response to hyperosmotic and heat shock by preventing the aggregation of stress-denatured proteins, in association with DnaK and GrpE. It is the nucleotide exchange factor for DnaK and may function as a thermosensor. Unfolded proteins bind initially to DnaJ; upon interaction with the DnaJ-bound protein, DnaK hydrolyzes its bound ATP, resulting in the formation of a stable complex. GrpE releases ADP from DnaK; ATP binding to DnaK triggers the release of the substrate protein, thus completing the reaction cycle. Several rounds of ATP-dependent interactions between DnaJ, DnaK and GrpE are required for fully efficient folding. The polypeptide is Protein GrpE (Synechococcus elongatus (strain ATCC 33912 / PCC 7942 / FACHB-805) (Anacystis nidulans R2)).